Reading from the N-terminus, the 318-residue chain is Receptor homology region, transmembrane domain- and RING domain-containing protein 5 (318 aa).

An N-terminal signal peptide occupies residues 1–20 (MNYSWITIMSLLVICKLASA). Residues 22-163 (VVLIGKNTIL…IPGFGISSWS (142 aa)) are Lumenal-facing. The cysteines at positions 62 and 87 are disulfide-linked. The 74-residue stretch at 70 to 143 (EKRSKYRSSY…RASGEVLKGY (74 aa)) folds into the PA domain. N121 is a glycosylation site (N-linked (GlcNAc...) asparagine). The helical transmembrane segment at 164–184 (IMGITFISLLAMSAILATCFV) threads the bilayer. The Cytoplasmic portion of the chain corresponds to 185-318 (VRRHQIRQSV…DLPIVVRVYL (134 aa)). Residues 233 to 275 (CAICIDDYCVGEKLRILPCKHKYHAVCIDSWLGRCRSFCPVCK) form an RING-type; atypical zinc finger.

The protein resides in the prevacuolar compartment membrane. It is found in the protein storage vacuole membrane. Involved in the trafficking of vacuolar proteins. May function as a sorting receptor for protein trafficking to the protein storage vacuole (PSV). The polypeptide is Receptor homology region, transmembrane domain- and RING domain-containing protein 5 (RMR5) (Arabidopsis thaliana (Mouse-ear cress)).